The chain runs to 381 residues: Mannitol-1-phosphate 5-dehydrogenase (381 aa).

NAD(+) is bound at residue 3-14 (AVHFGAGNIGRG).

The protein belongs to the mannitol dehydrogenase family.

It catalyses the reaction D-mannitol 1-phosphate + NAD(+) = beta-D-fructose 6-phosphate + NADH + H(+). This chain is Mannitol-1-phosphate 5-dehydrogenase, found in Photobacterium profundum (strain SS9).